Here is a 473-residue protein sequence, read N- to C-terminus: ATP synthase subunit beta (473 aa).

ATP is bound at residue 153-160 (GGAGVGKT).

Belongs to the ATPase alpha/beta chains family. As to quaternary structure, F-type ATPases have 2 components, CF(1) - the catalytic core - and CF(0) - the membrane proton channel. CF(1) has five subunits: alpha(3), beta(3), gamma(1), delta(1), epsilon(1). CF(0) has three main subunits: a(1), b(2) and c(9-12). The alpha and beta chains form an alternating ring which encloses part of the gamma chain. CF(1) is attached to CF(0) by a central stalk formed by the gamma and epsilon chains, while a peripheral stalk is formed by the delta and b chains.

It localises to the cell inner membrane. The catalysed reaction is ATP + H2O + 4 H(+)(in) = ADP + phosphate + 5 H(+)(out). Produces ATP from ADP in the presence of a proton gradient across the membrane. The catalytic sites are hosted primarily by the beta subunits. The protein is ATP synthase subunit beta of Rickettsia massiliae (strain Mtu5).